The following is a 376-amino-acid chain: Putative F-box protein At3g18330 (376 aa).

One can recognise an F-box domain in the interval 1–46 (MPMPNLPKELVEEILSFVPATYLKRLSATCKPWNRLIHNDKRFARK).

The protein is Putative F-box protein At3g18330 of Arabidopsis thaliana (Mouse-ear cress).